A 192-amino-acid polypeptide reads, in one-letter code: Flavin prenyltransferase UbiX (192 aa).

FMN-binding positions include 10-12, S36, 92-95, and R127; these read GAS and SVAT. Dimethylallyl phosphate is bound by residues Y157 and K173.

Belongs to the UbiX/PAD1 family.

It catalyses the reaction dimethylallyl phosphate + FMNH2 = prenylated FMNH2 + phosphate. Its function is as follows. Flavin prenyltransferase that catalyzes the synthesis of the prenylated FMN cofactor (prenyl-FMN) for 4-hydroxy-3-polyprenylbenzoic acid decarboxylase UbiD. The prenyltransferase is metal-independent and links a dimethylallyl moiety from dimethylallyl monophosphate (DMAP) to the flavin N5 and C6 atoms of FMN. This Chlamydia trachomatis serovar D (strain ATCC VR-885 / DSM 19411 / UW-3/Cx) protein is Flavin prenyltransferase UbiX.